Reading from the N-terminus, the 144-residue chain is Mannitol-specific phosphotransferase enzyme IIA component (144 aa).

Positions 3 to 142 constitute a PTS EIIA type-2 domain; sequence ELFSNDNIFL…EEIKQVFEEA (140 aa). The active-site Tele-phosphohistidine intermediate is His63. Phosphohistidine; by HPr is present on His63.

Homodimer or homotrimer. Seems to be a monomer when not phosphorylated.

The protein resides in the cytoplasm. Its function is as follows. The phosphoenolpyruvate-dependent sugar phosphotransferase system (sugar PTS), a major carbohydrate active transport system, catalyzes the phosphorylation of incoming sugar substrates concomitantly with their translocation across the cell membrane. The enzyme II CmtAB PTS system is involved in D-mannitol transport. This is Mannitol-specific phosphotransferase enzyme IIA component (mtlF) from Staphylococcus aureus (strain COL).